Here is a 427-residue protein sequence, read N- to C-terminus: Glutamate-1-semialdehyde 2,1-aminomutase (427 aa).

Lys265 is modified (N6-(pyridoxal phosphate)lysine).

This sequence belongs to the class-III pyridoxal-phosphate-dependent aminotransferase family. HemL subfamily. In terms of assembly, homodimer. Pyridoxal 5'-phosphate is required as a cofactor.

The protein resides in the cytoplasm. It carries out the reaction (S)-4-amino-5-oxopentanoate = 5-aminolevulinate. Its pathway is porphyrin-containing compound metabolism; protoporphyrin-IX biosynthesis; 5-aminolevulinate from L-glutamyl-tRNA(Glu): step 2/2. This Pseudomonas aeruginosa (strain UCBPP-PA14) protein is Glutamate-1-semialdehyde 2,1-aminomutase.